Reading from the N-terminus, the 486-residue chain is Bifunctional protein HldE (486 aa).

Residues 1–331 are ribokinase; it reads MAEHDDGDLI…VDAVKPASGA (331 aa). Residue 208-211 coordinates ATP; sequence NRRE. Aspartate 277 is a catalytic residue. The interval 357-486 is cytidylyltransferase; it reads FTNGCFDLLH…TTATVTRLRS (130 aa).

This sequence in the N-terminal section; belongs to the carbohydrate kinase PfkB family. It in the C-terminal section; belongs to the cytidylyltransferase family. In terms of assembly, homodimer.

The enzyme catalyses D-glycero-beta-D-manno-heptose 7-phosphate + ATP = D-glycero-beta-D-manno-heptose 1,7-bisphosphate + ADP + H(+). It catalyses the reaction D-glycero-beta-D-manno-heptose 1-phosphate + ATP + H(+) = ADP-D-glycero-beta-D-manno-heptose + diphosphate. Its pathway is nucleotide-sugar biosynthesis; ADP-L-glycero-beta-D-manno-heptose biosynthesis; ADP-L-glycero-beta-D-manno-heptose from D-glycero-beta-D-manno-heptose 7-phosphate: step 1/4. It functions in the pathway nucleotide-sugar biosynthesis; ADP-L-glycero-beta-D-manno-heptose biosynthesis; ADP-L-glycero-beta-D-manno-heptose from D-glycero-beta-D-manno-heptose 7-phosphate: step 3/4. In terms of biological role, catalyzes the phosphorylation of D-glycero-D-manno-heptose 7-phosphate at the C-1 position to selectively form D-glycero-beta-D-manno-heptose-1,7-bisphosphate. Catalyzes the ADP transfer from ATP to D-glycero-beta-D-manno-heptose 1-phosphate, yielding ADP-D-glycero-beta-D-manno-heptose. The chain is Bifunctional protein HldE from Acidiphilium cryptum (strain JF-5).